The sequence spans 264 residues: 3-methyl-2-oxobutanoate hydroxymethyltransferase (264 aa).

2 residues coordinate Mg(2+): D41 and D80. Residues 41–42, D80, and K109 contribute to the 3-methyl-2-oxobutanoate site; that span reads DS. E111 serves as a coordination point for Mg(2+). The active-site Proton acceptor is the E178.

The protein belongs to the PanB family. Homodecamer; pentamer of dimers. Mg(2+) serves as cofactor.

Its subcellular location is the cytoplasm. The catalysed reaction is 3-methyl-2-oxobutanoate + (6R)-5,10-methylene-5,6,7,8-tetrahydrofolate + H2O = 2-dehydropantoate + (6S)-5,6,7,8-tetrahydrofolate. The protein operates within cofactor biosynthesis; (R)-pantothenate biosynthesis; (R)-pantoate from 3-methyl-2-oxobutanoate: step 1/2. In terms of biological role, catalyzes the reversible reaction in which hydroxymethyl group from 5,10-methylenetetrahydrofolate is transferred onto alpha-ketoisovalerate to form ketopantoate. The polypeptide is 3-methyl-2-oxobutanoate hydroxymethyltransferase (Thermosipho melanesiensis (strain DSM 12029 / CIP 104789 / BI429)).